The following is a 123-amino-acid chain: MRIKRSVHARKKRREKFLKSAKGYRGAIKRRYRLAKQHYYRAKWYAYAGRKLKKRDFRSLWITRINIAARQNGLKYSQLMHGLKLANISVNRKMLAELAINDPPAFSEYVKIAKEQLQKEAVK.

It belongs to the bacterial ribosomal protein bL20 family.

In terms of biological role, binds directly to 23S ribosomal RNA and is necessary for the in vitro assembly process of the 50S ribosomal subunit. It is not involved in the protein synthesizing functions of that subunit. The chain is Large ribosomal subunit protein bL20 from Pseudothermotoga lettingae (strain ATCC BAA-301 / DSM 14385 / NBRC 107922 / TMO) (Thermotoga lettingae).